The following is a 513-amino-acid chain: Dentin matrix acidic phosphoprotein 1 (513 aa).

Positions 1 to 16 (MKISILLMFLWGLSCA) are cleaved as a signal peptide. Residues 23–513 (QNNESEDSEE…QDDNDCQDGY (491 aa)) are disordered. N-linked (GlcNAc...) asparagine glycosylation occurs at N25. Over residues 46-60 (ESSESSEGSKVSSEE) the composition is skewed to low complexity. The segment covering 101–119 (DKDDDEDDSGDDTFGDDDS) has biased composition (acidic residues). Residues 143 to 162 (TIQASEESAPQGQDSAQDTT) are compositionally biased toward polar residues. Residues 163 to 180 (SESRELDNEDRVDSKPEG) show a composition bias toward basic and acidic residues. Acidic residues predominate over residues 208–220 (SELDDEGMQSDDP). A compositionally biased stretch (polar residues) spans 245–257 (NSEQANTQDSGGS). Acidic residues predominate over residues 275–287 (EEDDRSELDDNNT). N-linked (GlcNAc...) asparagine glycosylation occurs at N285. Polar residues predominate over residues 296–307 (TENSNSRDTGLS). Positions 309–325 (PRRDSKGDSQEDSKENL) are enriched in basic and acidic residues. Residues N324, N345, and N351 are each glycosylated (N-linked (GlcNAc...) asparagine). The segment covering 337–354 (SSESSQEANLSSQENSSE) has biased composition (low complexity). Positions 364 to 366 (RGD) match the Cell attachment site motif. Over residues 376-386 (EDQEDSDSSEE) the composition is skewed to acidic residues. 2 N-linked (GlcNAc...) asparagine glycosylation sites follow: N413 and N426. Residues 417 to 426 (ESPESPEDEN) are compositionally biased toward acidic residues. Residues 427–442 (SSSQEGLQSHSSSAES) show a composition bias toward low complexity. An N-linked (GlcNAc...) asparagine glycan is attached at N467. A compositionally biased stretch (basic and acidic residues) spans 484–502 (IEIESRKLTVDAYHNKPIG). The segment covering 503-513 (DQDDNDCQDGY) has biased composition (acidic residues).

As to quaternary structure, interacts with importin alpha. Post-translationally, phosphorylated in the cytosol and extracellular matrix and unphosphorylated in the nucleus. Phosphorylation is necessary for nucleocytoplasmic transport and may be catalyzed by a nuclear isoform of CK2 and can be augmented by calcium. Phosphorylated (in vitro) by FAM20C in the extracellular medium at sites within the S-x-E/pS motif. In terms of tissue distribution, expressed in tooth particularly in odontoblast, ameloblast and cementoblast.

The protein localises to the nucleus. It is found in the cytoplasm. Its subcellular location is the secreted. The protein resides in the extracellular space. It localises to the extracellular matrix. May have a dual function during osteoblast differentiation. In the nucleus of undifferentiated osteoblasts, unphosphorylated form acts as a transcriptional component for activation of osteoblast-specific genes like osteocalcin. During the osteoblast to osteocyte transition phase it is phosphorylated and exported into the extracellular matrix, where it regulates nucleation of hydroxyapatite. The protein is Dentin matrix acidic phosphoprotein 1 (DMP1) of Homo sapiens (Human).